The primary structure comprises 316 residues: MIGDGKLLASAAWDAQSLNELKAKAGQDPAANIRPVARQVEGMFVQMMLKSMREALPKDGLFSSDQTRLYTSMYDQQIAQQMTAGKGLGLADMMVKQMTSGQTMPADDAPQVPLKFSLETVNSYQNQALTQLVRKAIPKTPDSSDAPLSGDSKDFLARLSLPARLASEQSGVPHHLILAQAALESGWGQRQILRENGEPSYNVFGVKATASWKGPVTEITTTEYENGEAKKVKAKFRVYSSYLEALSDYVALLTRNPRYAAVTTAATAEQGAVALQNAGYATDPNYARKLTSMIQQLKAMSEKVSKTYSANLDNLF.

A catalytic region spans residues 151–316 (DSKDFLARLS…TYSANLDNLF (166 aa)). Catalysis depends on residues Glu-223 and Asp-248.

In the N-terminal section; belongs to the FlgJ family. This sequence in the C-terminal section; belongs to the glycosyl hydrolase 73 family.

It is found in the periplasm. Functionally, flagellum-specific muramidase which hydrolyzes the peptidoglycan layer to assemble the rod structure in the periplasmic space. This Salmonella typhimurium (strain LT2 / SGSC1412 / ATCC 700720) protein is Peptidoglycan hydrolase FlgJ (flgJ).